Here is a 215-residue protein sequence, read N- to C-terminus: MKFFLDTANVEKIKEFNALGLVDGVTTNPSLIKKEGRDFYEVIKEICSIVDGPVSAEVIALDAEGMVKEARELVKIAENVVVKIPMTKEGMKAVNTLSNEGIKTNVTLIFSANQALLAAKAGASYVSPFVGRLDDVGQDGMFLISEVMQVFGAYGIETEVIVASVRHPIHVLESAKMGADIATIPFDVLDKLFNHPLTDNGIAKFLADWEAHTNR.

K83 acts as the Schiff-base intermediate with substrate in catalysis.

This sequence belongs to the transaldolase family. Type 3B subfamily.

It localises to the cytoplasm. The enzyme catalyses D-sedoheptulose 7-phosphate + D-glyceraldehyde 3-phosphate = D-erythrose 4-phosphate + beta-D-fructose 6-phosphate. The protein operates within carbohydrate degradation; pentose phosphate pathway; D-glyceraldehyde 3-phosphate and beta-D-fructose 6-phosphate from D-ribose 5-phosphate and D-xylulose 5-phosphate (non-oxidative stage): step 2/3. In terms of biological role, transaldolase is important for the balance of metabolites in the pentose-phosphate pathway. This is Probable transaldolase from Methanococcus maripaludis (strain C5 / ATCC BAA-1333).